The primary structure comprises 572 residues: Urease subunit alpha (572 aa).

In terms of domain architecture, Urease spans 134-572 (GGIDAHVHMI…VSLGQLYFFS (439 aa)). H139, H141, and K222 together coordinate Ni(2+). The residue at position 222 (K222) is an N6-carboxylysine. Position 224 (H224) interacts with substrate. Ni(2+) contacts are provided by H251 and H277. H325 acts as the Proton donor in catalysis. D365 lines the Ni(2+) pocket.

This sequence belongs to the metallo-dependent hydrolases superfamily. Urease alpha subunit family. As to quaternary structure, heterotrimer of UreA (gamma), UreB (beta) and UreC (alpha) subunits. Three heterotrimers associate to form the active enzyme. It depends on Ni cation as a cofactor. Carboxylation allows a single lysine to coordinate two nickel ions.

It is found in the cytoplasm. It carries out the reaction urea + 2 H2O + H(+) = hydrogencarbonate + 2 NH4(+). It participates in nitrogen metabolism; urea degradation; CO(2) and NH(3) from urea (urease route): step 1/1. This chain is Urease subunit alpha, found in Laribacter hongkongensis (strain HLHK9).